The following is a 645-amino-acid chain: UvrABC system protein C (645 aa).

Residues 12–91 enclose the GIY-YIG domain; that stretch reads TGPGVYLYKN…IKQRKPRFNV (80 aa). In terms of domain architecture, UVR spans 202–237; the sequence is ADLERSLEVRMQEAAAAEQFELAAKYRDLLVTLHQL.

This sequence belongs to the UvrC family. In terms of assembly, interacts with UvrB in an incision complex.

It is found in the cytoplasm. Its function is as follows. The UvrABC repair system catalyzes the recognition and processing of DNA lesions. UvrC both incises the 5' and 3' sides of the lesion. The N-terminal half is responsible for the 3' incision and the C-terminal half is responsible for the 5' incision. This chain is UvrABC system protein C, found in Acidobacterium capsulatum (strain ATCC 51196 / DSM 11244 / BCRC 80197 / JCM 7670 / NBRC 15755 / NCIMB 13165 / 161).